The sequence spans 425 residues: Serine--tRNA ligase (425 aa).

Residue 230-232 coordinates L-serine; sequence TAE. 261–263 serves as a coordination point for ATP; that stretch reads RSE. An L-serine-binding site is contributed by E284. 348–351 contacts ATP; sequence EISS. Residue S384 coordinates L-serine.

This sequence belongs to the class-II aminoacyl-tRNA synthetase family. Type-1 seryl-tRNA synthetase subfamily. As to quaternary structure, homodimer. The tRNA molecule binds across the dimer.

It localises to the cytoplasm. The catalysed reaction is tRNA(Ser) + L-serine + ATP = L-seryl-tRNA(Ser) + AMP + diphosphate + H(+). It catalyses the reaction tRNA(Sec) + L-serine + ATP = L-seryl-tRNA(Sec) + AMP + diphosphate + H(+). Its pathway is aminoacyl-tRNA biosynthesis; selenocysteinyl-tRNA(Sec) biosynthesis; L-seryl-tRNA(Sec) from L-serine and tRNA(Sec): step 1/1. Its function is as follows. Catalyzes the attachment of serine to tRNA(Ser). Is also able to aminoacylate tRNA(Sec) with serine, to form the misacylated tRNA L-seryl-tRNA(Sec), which will be further converted into selenocysteinyl-tRNA(Sec). The sequence is that of Serine--tRNA ligase from Streptococcus pyogenes serotype M12 (strain MGAS2096).